The sequence spans 454 residues: Chromosomal replication initiator protein DnaA (454 aa).

Residues 1-80 form a domain I, interacts with DnaA modulators region; it reads MNLSNLWQSC…NPELRISLKE (80 aa). The interval 80-117 is domain II; it reads EGVKPAPKIVESTPNTSLRSESAVDFQAESSASVKFES. Residues 118 to 335 form a domain III, AAA+ region region; that stretch reads HLNTKHLFDN…GALNRVKAMQ (218 aa). Gly-163, Gly-165, Lys-166, and Thr-167 together coordinate ATP. Residues 336-454 form a domain IV, binds dsDNA region; sequence DFKGGDIDID…WANLIRTLSA (119 aa).

It belongs to the DnaA family. Oligomerizes as a right-handed, spiral filament on DNA at oriC.

Its subcellular location is the cytoplasm. In terms of biological role, plays an essential role in the initiation and regulation of chromosomal replication. ATP-DnaA binds to the origin of replication (oriC) to initiate formation of the DNA replication initiation complex once per cell cycle. Binds the DnaA box (a 9 base pair repeat at the origin) and separates the double-stranded (ds)DNA. Forms a right-handed helical filament on oriC DNA; dsDNA binds to the exterior of the filament while single-stranded (ss)DNA is stabiized in the filament's interior. The ATP-DnaA-oriC complex binds and stabilizes one strand of the AT-rich DNA unwinding element (DUE), permitting loading of DNA polymerase. After initiation quickly degrades to an ADP-DnaA complex that is not apt for DNA replication. Binds acidic phospholipids. This chain is Chromosomal replication initiator protein DnaA, found in Haemophilus influenzae (strain ATCC 51907 / DSM 11121 / KW20 / Rd).